Here is a 108-residue protein sequence, read N- to C-terminus: uncharacterized protein (108 aa).

Helical transmembrane passes span 51–71 and 86–106; these read VFAA…FCFL and PLST…KSLL.

The protein localises to the membrane. This is an uncharacterized protein from Saccharomyces cerevisiae (strain ATCC 204508 / S288c) (Baker's yeast).